Consider the following 513-residue polypeptide: MQLNSTEISELIKKRIAQFDVVSEARNTGTIVSVSDGIIRIHGLSDVMQGEMIALPGNRYAMALNLERDSVGAVVMGPYADLAEGMEVQCTGRILEVPVGRGLLGRVVNTLGQPIDGKGEIENDGFSPVEVIAPGVIDRRSVDQPVQTGYKAVDSMVPIGRGQRELIIGDRQTGKTALAIDAIINQRNSGIKCIYVAIGQKASTIANVVRKLEEHGALANTIVVAASASESAALQYLAPYAGCAMGEYFRDRGEDALIVYDDLSKQAVAYRQISLLLRRPPGREAYPGDVFYLHSRLLERASRVNEDYVEKFTKGEVKGKTGSLTALPIIETQAGDVSAFVPTNVISITDGQIFLESNLFNSGIRPAVNPGISVSRVGGSAQTKVIKKLAGGIRTALAQYRELAAFAQFASDLDDATRKQLSHGEKVTELLKQKQFTPLSVAEQAVILFAVEFGYLDDVELSKIASFETALLDYSNRNHAEFMQELNKTGNYNDEIKDTLKSILDGFKANSAW.

169 to 176 (GDRQTGKT) is an ATP binding site.

This sequence belongs to the ATPase alpha/beta chains family. As to quaternary structure, F-type ATPases have 2 components, CF(1) - the catalytic core - and CF(0) - the membrane proton channel. CF(1) has five subunits: alpha(3), beta(3), gamma(1), delta(1), epsilon(1). CF(0) has three main subunits: a(1), b(2) and c(9-12). The alpha and beta chains form an alternating ring which encloses part of the gamma chain. CF(1) is attached to CF(0) by a central stalk formed by the gamma and epsilon chains, while a peripheral stalk is formed by the delta and b chains.

The protein localises to the cell inner membrane. It catalyses the reaction ATP + H2O + 4 H(+)(in) = ADP + phosphate + 5 H(+)(out). Functionally, produces ATP from ADP in the presence of a proton gradient across the membrane. The alpha chain is a regulatory subunit. The protein is ATP synthase subunit alpha of Haemophilus influenzae (strain ATCC 51907 / DSM 11121 / KW20 / Rd).